Reading from the N-terminus, the 67-residue chain is Beta-defensin 103A (67 aa).

The signal sequence occupies residues methionine 1 to glycine 22. 3 disulfides stabilise this stretch: cysteine 33–cysteine 62, cysteine 40–cysteine 55, and cysteine 45–cysteine 63.

It belongs to the beta-defensin family.

It is found in the secreted. Its function is as follows. Exhibits antimicrobial activity against Gram-positive and Gram-negative bacteria. The protein is Beta-defensin 103A (DEFB103A) of Pan troglodytes (Chimpanzee).